The sequence spans 316 residues: Serpentine receptor class delta-48 (316 aa).

Transmembrane regions (helical) follow at residues 8–28 (FFYI…IFVI), 42–62 (FLLC…LLQL), 89–109 (LFYV…FITI), 127–147 (VVII…QIDL), 185–205 (FLLT…GFFI), 236–256 (TLQS…YFVV), and 269–289 (ILPV…LYSV).

Belongs to the nematode receptor-like protein srd family.

It localises to the membrane. This Caenorhabditis elegans protein is Serpentine receptor class delta-48 (srd-48).